A 188-amino-acid chain; its full sequence is uncharacterized protein (188 aa).

A disordered region spans residues 121 to 142; it reads ADTLSRKNKRSSDQKRNGQHFE. Positions 130–142 are enriched in basic and acidic residues; that stretch reads RSSDQKRNGQHFE.

Belongs to the chlamydial CPn_0422/CT_273/TC_0545 family.

This is an uncharacterized protein from Chlamydia trachomatis serovar D (strain ATCC VR-885 / DSM 19411 / UW-3/Cx).